A 66-amino-acid polypeptide reads, in one-letter code: MKKEIHPEYVECKVSCACGNSFTTKSNKPEIKVDICSSCHPFFTGSEKIVDAAGRVEKFKKKYAMQ.

Zn(2+)-binding residues include C16, C18, C36, and C39.

It belongs to the bacterial ribosomal protein bL31 family. Type A subfamily. Part of the 50S ribosomal subunit. Zn(2+) is required as a cofactor.

Binds the 23S rRNA. The protein is Large ribosomal subunit protein bL31 of Campylobacter lari (strain RM2100 / D67 / ATCC BAA-1060).